The following is a 460-amino-acid chain: Muscarinic acetylcholine receptor M1 (460 aa).

Residues 1-22 lie on the Extracellular side of the membrane; it reads MNTSAPPAVSPNITVLAPGKGP. N-linked (GlcNAc...) asparagine glycosylation is found at N2 and N12. The chain crosses the membrane as a helical span at residues 23-48; that stretch reads WQVAFIGITTGLLSLATVTGNLLVLI. Topologically, residues 49 to 62 are cytoplasmic; it reads SFKVNTELKTVNNY. A helical membrane pass occupies residues 63–84; that stretch reads FLLSLACADLIIGTFSMNLYTT. Residues 85 to 95 lie on the Extracellular side of the membrane; it reads YLLMGHWALGT. The chain crosses the membrane as a helical span at residues 96–121; it reads LACDLWLALDYVASNASVMNLLLISF. C98 and C178 are disulfide-bonded. At 122 to 142 the chain is on the cytoplasmic side; sequence DRYFSVTRPLSYRAKRTPRRA. The helical transmembrane segment at 143–164 threads the bilayer; the sequence is ALMIGLAWLVSFVLWAPAILFW. At 165–185 the chain is on the extracellular side; that stretch reads QYLVGERTVLAGQCYIQFLSQ. The helical transmembrane segment at 186–209 threads the bilayer; sequence PIITFGTAMAAFYLPVTVMCTLYW. At 210 to 366 the chain is on the cytoplasmic side; it reads RIYRETESRA…LVKEKKAART (157 aa). Disordered stretches follow at residues 225 to 256, 274 to 297, and 310 to 351; these read LQGS…GTPP, WKEE…EEPG, and EAQA…QLAK. T230 is modified (phosphothreonine). Over residues 238 to 247 the composition is skewed to low complexity; that stretch reads SSSSERSQPG. The span at 328 to 343 shows a compositional bias: basic residues; it reads RPTKKGRDRAGKGQKP. A helical membrane pass occupies residues 367–390; sequence LSAILLAFILTWTPYNIMVLVSTF. Over 391-397 the chain is Extracellular; sequence CKDCVPE. The chain crosses the membrane as a helical span at residues 398–420; it reads TLWELGYWLCYVNSTINPMCYAL. At 421–460 the chain is on the cytoplasmic side; it reads CNKAFRDTFRLLLLCRWDKRRWRKIPKRPGSVHRTPSRQC. T428 is modified (phosphothreonine). Position 451 is a phosphoserine (S451). T455 carries the post-translational modification Phosphothreonine. At S457 the chain carries Phosphoserine.

This sequence belongs to the G-protein coupled receptor 1 family. Muscarinic acetylcholine receptor subfamily. CHRM1 sub-subfamily. Interacts with GPRASP2. Interacts with TMEM147.

It localises to the cell membrane. The protein resides in the postsynaptic cell membrane. Its function is as follows. The muscarinic acetylcholine receptor mediates various cellular responses, including inhibition of adenylate cyclase, breakdown of phosphoinositides and modulation of potassium channels through the action of G proteins. Primary transducing effect is Pi turnover. The chain is Muscarinic acetylcholine receptor M1 (CHRM1) from Pongo abelii (Sumatran orangutan).